The chain runs to 85 residues: Large ribosomal subunit protein bL27 (85 aa).

Residues 1 to 26 are disordered; sequence MAHKKGVGSSRNGRDSNPKMLGVKRF.

Belongs to the bacterial ribosomal protein bL27 family.

In Roseiflexus sp. (strain RS-1), this protein is Large ribosomal subunit protein bL27.